The sequence spans 298 residues: Ketohexokinase (298 aa).

Residues Asp15, Gly41, Asn42, and Asn45 each coordinate beta-D-fructose. ATP is bound by residues Arg108, 226–229 (AEEG), and 255–258 (GAGD). Asp258 provides a ligand contact to beta-D-fructose.

Belongs to the carbohydrate kinase PfkB family. Homodimer.

It carries out the reaction beta-D-fructose + ATP = beta-D-fructose 1-phosphate + ADP + H(+). It functions in the pathway carbohydrate metabolism; fructose metabolism. With respect to regulation, requires potassium. Inhibition by ADP. Its function is as follows. Catalyzes the phosphorylation of the ketose sugar fructose to fructose-1-phosphate. The sequence is that of Ketohexokinase from Mus musculus (Mouse).